Reading from the N-terminus, the 108-residue chain is Urease subunit beta (108 aa).

This sequence belongs to the urease beta subunit family. In terms of assembly, heterotrimer of UreA (gamma), UreB (beta) and UreC (alpha) subunits. Three heterotrimers associate to form the active enzyme.

The protein resides in the cytoplasm. It catalyses the reaction urea + 2 H2O + H(+) = hydrogencarbonate + 2 NH4(+). It functions in the pathway nitrogen metabolism; urea degradation; CO(2) and NH(3) from urea (urease route): step 1/1. In Chromohalobacter salexigens (strain ATCC BAA-138 / DSM 3043 / CIP 106854 / NCIMB 13768 / 1H11), this protein is Urease subunit beta.